The chain runs to 361 residues: Dynein axonemal assembly factor 8 (361 aa).

2 disordered regions span residues 65 to 191 (DPAG…ERRK) and 309 to 334 (AQPGYGTARERVGSSSSSGHLGRRPL). Positions 136–157 (TLNTSASQSPRQGPQGEATRSP) are enriched in polar residues. Phosphoserine occurs at positions 142 and 144. Over residues 321–334 (GSSSSSGHLGRRPL) the composition is skewed to low complexity.

It localises to the dynein axonemal particle. The protein localises to the cytoplasm. In terms of biological role, in cyliated cells, dynein axonemal particle-specific protein required for deployment of ODA to the axoneme. Interacts with outer dynein arm (ODA) subunits. The protein is Dynein axonemal assembly factor 8 (DNAAF8) of Bos taurus (Bovine).